The sequence spans 345 residues: MGYEPDPDALRWGLHDLEVCTLTNAGSCSSVTRYESGGGGTQGYVREGYNQPVTGYVDNDAVIAQFYQDELSRVARAEASGINSLSPTSVVAQDWPHPHQGQENQGEAIDITQESDILHNHNGNMEDKNVARIRFEGGQSSPSRDDDSVCSVEIEEESWSEVGKRLNQMIPIAHVPKINGELPSEDEQISDHERLFQRLQLYGLVENKIEGDGNCQFRSLSDQLYRSPEHHNFVREQVVNQLAYNREIYEGYVPMAYNDYLKAMKRNGEWGDHVTLQAAADLFGVRMFVITSFKDTCYIEILPHFQKSNRLICLSFWAEVHYNSIYPEGELPIPEGKKKKKYWVF.

In terms of domain architecture, OTU spans 204–328; the sequence is LVENKIEGDG…EVHYNSIYPE (125 aa). Asp-212 is an active-site residue. Cys-215 serves as the catalytic Nucleophile. The active site involves His-321.

The protein belongs to the peptidase C85 family.

It carries out the reaction Thiol-dependent hydrolysis of ester, thioester, amide, peptide and isopeptide bonds formed by the C-terminal Gly of ubiquitin (a 76-residue protein attached to proteins as an intracellular targeting signal).. Functionally, hydrolase that can remove conjugated ubiquitin from proteins in vitro and may therefore play an important regulatory role at the level of protein turnover by preventing degradation. Cysteine protease with a preference for 'Lys-63' and 'Lys-48' -linked ubiquitin (UB) tetramers as substrates. Also cleaves RUB-GST fusion. The polypeptide is OVARIAN TUMOR DOMAIN-containing deubiquitinating enzyme 9 (Arabidopsis thaliana (Mouse-ear cress)).